We begin with the raw amino-acid sequence, 299 residues long: DNA-binding transcriptional repressor CapW (299 aa).

Residues 1 to 84 (MESSGSSKVR…EFKPITKRSE (84 aa)) are winged HTH domain. A WYL domain region spans residues 85-196 (ATRYLNELQR…IGRLDVLEHV (112 aa)). In terms of domain architecture, WYL spans 120–200 (SRAIEADEVA…DVLEHVFSAK (81 aa)). Residues 145–189 (YQSMDAPEPQEWVLSPHALGFDGLRWHARAWCHARQVFRDFAIGR) are probable ligand-binding region. The WCX domain stretch occupies residues 197–299 (FSAKPVDPLL…DRDGLQHLRR (103 aa)).

Homodimer.

Its function is as follows. Transcriptional regulator of a CBASS antivirus system. CBASS (cyclic oligonucleotide-based antiphage signaling system) provides immunity against bacteriophage. The CD-NTase protein synthesizes cyclic nucleotides in response to infection; these serve as specific second messenger signals. The signals activate a diverse range of effectors, leading to bacterial cell death and thus abortive phage infection. A type III CBASS system, part of a CapW-Cap6-Cap8-Cap7-CdnC-NucC locus. Binds specifically to palindromes that overlap the -10 site in the promoter of cap6, found beween found between the genes for divergently transcribed capW and cap6 (cognate DNA). Probably represses transcription bidirectionally from the promoter. Mutations that make it a constitutive repressor in E.coli do not change DNA-binding affinity. The sequence is that of DNA-binding transcriptional repressor CapW from Stenotrophomonas maltophilia (Pseudomonas maltophilia).